Consider the following 89-residue polypeptide: Alpha-latrotoxin associated low molecular weight protein SGV242-280 (89 aa).

Residues 1–18 (MSKLHFLILLSVIVSVFC) form the signal peptide.

It belongs to the arthropod CHH/MIH/GIH/VIH hormone family. Expressed by the venom gland.

Its subcellular location is the secreted. Functionally, may increase the toxicity of alpha-latrotoxin and/or other venom components. Is non-toxic to mice and to the cockroach Periplaneta americana. This chain is Alpha-latrotoxin associated low molecular weight protein SGV242-280, found in Steatoda grossa (False black widow).